An 88-amino-acid chain; its full sequence is RNA-binding protein Hfq (88 aa).

One can recognise a Sm domain in the interval D9–V68. The disordered stretch occupies residues R66–D88. Over residues H71–D88 the composition is skewed to basic and acidic residues.

It belongs to the Hfq family. Homohexamer.

Its function is as follows. RNA chaperone that binds small regulatory RNA (sRNAs) and mRNAs to facilitate mRNA translational regulation in response to envelope stress, environmental stress and changes in metabolite concentrations. Also binds with high specificity to tRNAs. In Vibrio atlanticus (strain LGP32) (Vibrio splendidus (strain Mel32)), this protein is RNA-binding protein Hfq.